Reading from the N-terminus, the 142-residue chain is Large ribosomal subunit protein uL13 (142 aa).

It belongs to the universal ribosomal protein uL13 family. In terms of assembly, part of the 50S ribosomal subunit.

Its function is as follows. This protein is one of the early assembly proteins of the 50S ribosomal subunit, although it is not seen to bind rRNA by itself. It is important during the early stages of 50S assembly. The polypeptide is Large ribosomal subunit protein uL13 (Nitrosococcus oceani (strain ATCC 19707 / BCRC 17464 / JCM 30415 / NCIMB 11848 / C-107)).